Reading from the N-terminus, the 359-residue chain is Opine dehydrogenase (359 aa).

Belongs to the lysopine/nopaline/octopine/opine/vitopine dehydrogenases family. Homodimer.

It carries out the reaction (2S)-2-[(R)-1-carboxyethylamino]pentanoate + NAD(+) + H2O = L-2-aminopentanoate + pyruvate + NADH + H(+). In terms of biological role, in the forward direction also acts on secondary amine dicarboxylates such as N-(1-carboxyethyl)methionine and N-(1-carboxyethyl)phenylalanine. In the reverse direction, the enzyme also acts on neutral amino acids as an amino donor. They include L-amino acids such as 2-aminopentanoic acid, 2-aminobutyric acid, 2-aminohexanoic acid, 3-chloroalanine, O-acetylserine, methionine, isoleucine, valine, phenylalanine, leucine and alanine. The sequence is that of Opine dehydrogenase (odh) from Arthrobacter sp. (strain 1C).